A 585-amino-acid chain; its full sequence is MAEAATGFLEQLKSCIVWSWTYLWTVWFFIVLFLVYVLRVPLKINDNLSTVSMFLNTLTPKFYVALTGTSSLISGLILIFEWWYFRKYGTSFIEQVSVSHLRPLLGGVDNNSSNNSNSSNGDSDSNRQSVSECKVWRNPLNLFRGAEYNRYTWVTGREPLTYYDMNLSAQDHQTFFTCDSDHLRPADAIMQKAWRERNPQARISAAHEALEINEIRSRVEVPLIASSTIWEIKLLPKCATAYILLAEEEATTIAEAEKLFKQALKAGDGCYRRSQQLQHHGSQYEAQHRRDTNVLVYIKRRLAMCARRLGRTREAVKMMRDLMKEFPLLSMFNIHENLLEALLELQAYADVQAVLAKYDDISLPKSATICYTAALLKARAVSDKFSPEAASRRGLSTAEMNAVEAIHRAVEFNPHVPKYLLEMKSLILPPEHILKRGDSEAIAYAFFHLAHWKRVEGALNLLHCTWEGTFRMIPYPLEKGHLFYPYPICTETADRELLPSFHEVSVYPKKELPFFILFTAGLCSFTAMLALLTHQFPELMGVFAKAMSDIFCSAEFRDWNCKSIFMRVEDELEIPPAPQSQHFQN.

Residues 15–35 form a helical membrane-spanning segment; sequence CIVWSWTYLWTVWFFIVLFLV. A glycan (N-linked (GlcNAc...) asparagine) is linked at Asn-47. A helical membrane pass occupies residues 62–82; sequence FYVALTGTSSLISGLILIFEW. A Phosphoserine modification is found at Ser-386. The chain crosses the membrane as a helical span at residues 512-532; the sequence is LPFFILFTAGLCSFTAMLALL.

The protein belongs to the ST7 family.

The protein localises to the membrane. In Papio anubis (Olive baboon), this protein is Suppressor of tumorigenicity 7 protein (ST7).